The primary structure comprises 142 residues: Large ribosomal subunit protein uL11 (142 aa).

Belongs to the universal ribosomal protein uL11 family. Part of the ribosomal stalk of the 50S ribosomal subunit. Interacts with L10 and the large rRNA to form the base of the stalk. L10 forms an elongated spine to which L12 dimers bind in a sequential fashion forming a multimeric L10(L12)X complex. One or more lysine residues are methylated.

Functionally, forms part of the ribosomal stalk which helps the ribosome interact with GTP-bound translation factors. The protein is Large ribosomal subunit protein uL11 of Serratia proteamaculans (strain 568).